A 371-amino-acid chain; its full sequence is Leucine-rich repeat-containing protein 58 (371 aa).

Serine 24 is subject to Phosphoserine. LRR repeat units follow at residues 45–66, 69–91, 92–113, 121–143, 144–166, 167–189, 190–211, 213–234, and 236–256; these read ALLRLLLPHNRLVSLPRALGSG, HLQLLDVSGNALTALGPELLALR, GLRTLLAKNNRLGGPSALPKGL, SLQVLNLSGNCFQEVPASLLELR, ALQTLSLGGNQLQSIPAEIENLQ, SLECLYLGGNFIKEIPPELGNLP, SLNYLVLCDNKIQSIPPQLSQL, SLRSLSLHNNLLTYLPREILNL, and HLEELSLRGNPLVVRFVRDLT. A compositionally biased stretch (low complexity) spans 340–351; that stretch reads SSASHSSTSQSE. The tract at residues 340 to 361 is disordered; the sequence is SSASHSSTSQSESDSEDEASVA.

The sequence is that of Leucine-rich repeat-containing protein 58 (LRRC58) from Homo sapiens (Human).